A 70-amino-acid polypeptide reads, in one-letter code: Putative microRNA 17 host gene protein (70 aa).

Topologically, residues Met-1–Pro-20 are cytoplasmic. A helical transmembrane segment spans residues Leu-21–Cys-43. Topologically, residues Gln-44–Leu-70 are extracellular.

As to expression, highly expressed in B-cell lymphoma and lung cancer.

It localises to the membrane. The polypeptide is Putative microRNA 17 host gene protein (MIR17HG) (Homo sapiens (Human)).